The primary structure comprises 472 residues: Succinate-semialdehyde dehydrogenase [NADP(+)] (472 aa).

Residues 134-135 (WN), 158-161 (KHAS), and 210-211 (GS) contribute to the NADP(+) site. Glu232 functions as the Proton acceptor in the catalytic mechanism. Leu233 contacts NADP(+). The active-site Nucleophile is the Cys266. Glu363 contributes to the NADP(+) binding site.

Belongs to the aldehyde dehydrogenase family.

It catalyses the reaction succinate semialdehyde + NADP(+) + H2O = succinate + NADPH + 2 H(+). Its function is as follows. Catalyzes the NADP(+)-dependent oxidation of succinate semialdehyde to succinate. It is believed to be the main source of succinate semialdehyde dehydrogenase activity in Mycobacterium. This Mycolicibacterium paratuberculosis (strain ATCC BAA-968 / K-10) (Mycobacterium paratuberculosis) protein is Succinate-semialdehyde dehydrogenase [NADP(+)] (gabD1).